The chain runs to 277 residues: Putative phosphoenolpyruvate synthase regulatory protein (277 aa).

An ADP-binding site is contributed by 157–164 (GVSRSGKT).

This sequence belongs to the pyruvate, phosphate/water dikinase regulatory protein family. PSRP subfamily.

The catalysed reaction is [pyruvate, water dikinase] + ADP = [pyruvate, water dikinase]-phosphate + AMP + H(+). It carries out the reaction [pyruvate, water dikinase]-phosphate + phosphate + H(+) = [pyruvate, water dikinase] + diphosphate. Bifunctional serine/threonine kinase and phosphorylase involved in the regulation of the phosphoenolpyruvate synthase (PEPS) by catalyzing its phosphorylation/dephosphorylation. In Aromatoleum aromaticum (strain DSM 19018 / LMG 30748 / EbN1) (Azoarcus sp. (strain EbN1)), this protein is Putative phosphoenolpyruvate synthase regulatory protein.